Reading from the N-terminus, the 113-residue chain is Non-specific lipid-transfer protein (113 aa).

Residues 1 to 24 (AQVMLMAVALVLMLAAVPRAAVAI) form the signal peptide. Intrachain disulfides connect Cys-26–Cys-73, Cys-36–Cys-50, Cys-51–Cys-96, and Cys-71–Cys-110. Asp-30 is lipidated: Cis-14-hydroxy-10,13-dioxo-7-heptadecenoic acid aspartate ester.

The protein belongs to the plant LTP family.

In terms of biological role, plant non-specific lipid-transfer proteins transfer phospholipids as well as galactolipids across membranes. May play a role in wax or cutin deposition in the cell walls of expanding epidermal cells and certain secretory tissues. In Triticum aestivum (Wheat), this protein is Non-specific lipid-transfer protein.